A 660-amino-acid polypeptide reads, in one-letter code: Polyadenylate-binding protein 3 (660 aa).

4 consecutive RRM domains span residues 49 to 126 (SSLY…LSNR), 136 to 213 (GNIF…HFIR), 229 to 306 (TNVY…RAQK), and 332 to 409 (ANLY…LAQR). The PABC domain occupies 571–648 (PISKLTSSLA…ALDVLRLSVD (78 aa)).

This sequence belongs to the polyadenylate-binding protein type-1 family. In terms of tissue distribution, expressed predominantly in immature flowers. Detected in tapetum and pollen. Strongly expressed in immatures siliques.

Its subcellular location is the cytoplasm. The protein localises to the nucleus. Binds the poly(A) tail of mRNA. Appears to be an important mediator of the multiple roles of the poly(A) tail in mRNA biogenesis, stability and translation. In the cytoplasm, affects both translation and mRNA decay. Inhibits the polyadenylated RNA degradation by the Rrp41p 3'--&gt;5' exonuclease in vitro. Binds with the 5'UTRs of PAB2, PAB3 and with a lower affinity with the 5'UTR of PAB5. This Arabidopsis thaliana (Mouse-ear cress) protein is Polyadenylate-binding protein 3 (PAB3).